Here is a 546-residue protein sequence, read N- to C-terminus: Alkaline phosphatase PafA (546 aa).

The N-terminal stretch at 1–25 (MLTPKKWLLGVLVVSGMLGAQKTNA) is a signal peptide. Residues Asp38 and Thr79 each contribute to the Zn(2+) site. Catalysis depends on Thr79, which acts as the Phosphothreonine intermediate. Substrate-binding positions include Asn100 and 162-164 (KDR). 5 residues coordinate Zn(2+): Asp305, His309, Asp352, His353, and His486.

Requires Zn(2+) as cofactor.

Its subcellular location is the periplasm. It catalyses the reaction a phosphate monoester + H2O = an alcohol + phosphate. With respect to regulation, strongly inhibited by orthovanadate and EDTA. Also inhibited by inorganic phosphate. Alkaline phosphatase with broad substrate specificity. Has phosphatase activity towards nucleotide phosphates with a preference for ATP. Active towards a great variety of phosphomonoesters with the exception of 2',3'-cyclic AMP and myo-inositol hexakisphosphate. The polypeptide is Alkaline phosphatase PafA (Elizabethkingia meningoseptica (Chryseobacterium meningosepticum)).